Consider the following 67-residue polypeptide: Protein AaeX (67 aa).

A run of 2 helical transmembrane segments spans residues 9 to 29 (IFGL…ALFF) and 47 to 67 (PALF…CLFV).

The protein belongs to the AaeX family.

It is found in the cell membrane. This is Protein AaeX from Serratia marcescens.